Reading from the N-terminus, the 486-residue chain is Replication factor C large subunit (486 aa).

46–53 (GPPGSGKT) is an ATP binding site. The interval 419–486 (VKKETPKKTE…KKQATLDSFF (68 aa)) is disordered. 2 stretches are compositionally biased toward basic and acidic residues: residues 420-432 (KKETPKKTEKPKE) and 442-480 (RISEPPKEPLKEVIEETLEKSVEKADTKEEKKKDPKKQA).

It belongs to the activator 1 small subunits family. RfcL subfamily. In terms of assembly, heteromultimer composed of small subunits (RfcS) and large subunits (RfcL).

Part of the RFC clamp loader complex which loads the PCNA sliding clamp onto DNA. The protein is Replication factor C large subunit of Methanococcus maripaludis (strain DSM 14266 / JCM 13030 / NBRC 101832 / S2 / LL).